The primary structure comprises 901 residues: Protein translocase subunit SecA (901 aa).

Residues Gln87, 105–109 (GEGKT), and Asp512 contribute to the ATP site. The disordered stretch occupies residues 859 to 901 (HQDDDSAAAAALAAQTGERKVGRNDPCPCGSGKKYKQCHGRLQ). Cys885, Cys887, Cys896, and His897 together coordinate Zn(2+). Residues 891–901 (KKYKQCHGRLQ) are compositionally biased toward basic residues.

Belongs to the SecA family. Monomer and homodimer. Part of the essential Sec protein translocation apparatus which comprises SecA, SecYEG and auxiliary proteins SecDF-YajC and YidC. Zn(2+) serves as cofactor.

It localises to the cell inner membrane. Its subcellular location is the cytoplasm. It carries out the reaction ATP + H2O + cellular proteinSide 1 = ADP + phosphate + cellular proteinSide 2.. In terms of biological role, part of the Sec protein translocase complex. Interacts with the SecYEG preprotein conducting channel. Has a central role in coupling the hydrolysis of ATP to the transfer of proteins into and across the cell membrane, serving both as a receptor for the preprotein-SecB complex and as an ATP-driven molecular motor driving the stepwise translocation of polypeptide chains across the membrane. The chain is Protein translocase subunit SecA from Escherichia coli O139:H28 (strain E24377A / ETEC).